A 194-amino-acid chain; its full sequence is Large ribosomal subunit protein eL15 (194 aa).

Residues 161–194 (GLTSAGKKGRGLMYKGKGAEKARPSVRANGKKTK) are disordered.

Belongs to the eukaryotic ribosomal protein eL15 family.

The chain is Large ribosomal subunit protein eL15 from Methanococcus maripaludis (strain C5 / ATCC BAA-1333).